Reading from the N-terminus, the 369-residue chain is Virulence factor-related M protein (369 aa).

Positions 1–41 are cleaved as a signal peptide; sequence MARQQTKKNYSLRKLKTGTASVAVALTVLGAGFANQTEVRA. C repeat units lie at residues 120-154, 162-196, and 211-246; these read AKAT…EAKH, KKLT…EAKY, and QKLE…TSEL. 4 stretches are compositionally biased toward basic and acidic residues: residues 125–165, 202–219, 228–243, and 257–271; these read ENEI…KKLT, DHQA…DLPK, LSRD…KKVT, and EESK…AELQ. 2 disordered regions span residues 125–189 and 202–271; these read ENEI…RAAK and DHQA…AELQ. The 2 X repeats, type A stretch occupies residues 129-200; sequence SEASRKGLSR…ELEAKYQKLE (72 aa). Residues 132-241 are 3 X repeats, type B; sequence SRKGLSRDLE…LEASREANKK (110 aa). D repeat units follow at residues 272 to 277, 278 to 283, 286 to 291, and 293 to 298; these read AKLDAQ, GKALKE, AKQTEE, and AKLRAE. Basic and acidic residues predominate over residues 292-301; it reads LAKLRAEKAA. Residues 292–341 form a disordered region; it reads LAKLRAEKAAGSKTPATKPANKERSGRAAQTATRPSQNKGMRSQLPSTGE. Residues 319–338 show a composition bias toward polar residues; sequence AAQTATRPSQNKGMRSQLPS. An LPXTG sorting signal motif is present at residues 336-340; the sequence is LPSTG. Pentaglycyl murein peptidoglycan amidated threonine is present on threonine 339. Residues 340-369 constitute a propeptide, removed by sortase; it reads GEAANPFFTAAAATVMVSAGMLALKRKEEN.

Belongs to the M protein family.

It is found in the secreted. Its subcellular location is the cell wall. This Streptococcus pyogenes serotype M49 protein is Virulence factor-related M protein (ennX).